Reading from the N-terminus, the 63-residue chain is Large ribosomal subunit protein bL28 (63 aa).

The protein belongs to the bacterial ribosomal protein bL28 family.

This Desulforudis audaxviator (strain MP104C) protein is Large ribosomal subunit protein bL28.